The primary structure comprises 489 residues: Major aspartyl peptidase 1 (489 aa).

Positions M1–A16 are cleaved as a signal peptide. The Peptidase A1 domain occupies Y101–A432. D119 is a catalytic residue. Residue G121 participates in pepstatin A binding. C132 and C137 are disulfide-bonded. 3 residues coordinate pepstatin A: T161, G163, and S164. A glycan (N-linked (GlcNAc...) asparagine) is linked at N266. Residue Y286 participates in pepstatin A binding. The active site involves D317. Pepstatin A-binding residues include T320 and T321. The cysteines at positions 357 and 391 are disulfide-linked. The segment at A442–A466 is disordered. Gly residues predominate over residues T450–S463. Positions G456 to I489 are cleaved as a propeptide — removed at pH 5.0; by autocatalysis.

Belongs to the peptidase A1 family. Monomer. In terms of processing, activated by the autocatalytic cleavage of the propeptide. Cleaved at the end of the propeptide promiscuously from residue 76 to residue 79. C-terminal cleavage by autocatalysis at Gly-456 at the pH optimum indicating a possible regulatory or other function of this propeptide.

It localises to the secreted. Activated by low pH. Inhibited by pepstatin A with an IC(50) of 1.4 nM. Inhibited by acetyl pepstatin. Inhibited by HIV antiretroviral therapy protease inhibitors including amprenavir and ritonavir. Inhibited by HIV-1 protease inhibitor brecanavir with an approximate IC(50) of 352 nM. Inhibited by HIV-1 protease inhibitors CGP53437 and GS-8374. From the tested peptidomimetic inhibitor molecules, macrocycles containing P2-P3' tethered side chains, statines in P1 and an alpha amino acid in P2' are the best. From the linear peptidomimetic inhibitors, the ones with a phenylstatine or hydroxyethylamine scissile bond isoster are better than compounds with a reduced bond or a homo-amide. Overall, inhibitors with a phenylalanine side chain, either unsubstituted or with a small substituent, is preferred in P1 while a bulkier P1 side chain leads to lower inhibition. In terms of biological role, possesses prevalent extracellular endopeptidase activity at low pH condition. Required for high-density growth in acidic environments. Broad substrate specificity with preference cleavage of the peptide substrate between hydrophobic amino acids. Cleaves substrate at P1-P1' between Phe-Leu. Positively charged amino acids are preferred at P2. Prefers hydrophobic amino acids at the P3 and P4 positions. Cleaves substrate also at P1'-P2' between Leu-Val to some degree. Required for virulence in mouse inhalation model of infection. The sequence is that of Major aspartyl peptidase 1 from Cryptococcus neoformans var. grubii serotype A (strain H99 / ATCC 208821 / CBS 10515 / FGSC 9487) (Filobasidiella neoformans var. grubii).